We begin with the raw amino-acid sequence, 481 residues long: ATP synthase subunit beta, chloroplastic (481 aa).

Residue 161–168 coordinates ATP; that stretch reads GGAGVGKT.

The protein belongs to the ATPase alpha/beta chains family. In terms of assembly, F-type ATPases have 2 components, CF(1) - the catalytic core - and CF(0) - the membrane proton channel. CF(1) has five subunits: alpha(3), beta(3), gamma(1), delta(1), epsilon(1). CF(0) has four main subunits: a(1), b(1), b'(1) and c(9-12).

Its subcellular location is the plastid. The protein resides in the chloroplast thylakoid membrane. It carries out the reaction ATP + H2O + 4 H(+)(in) = ADP + phosphate + 5 H(+)(out). Functionally, produces ATP from ADP in the presence of a proton gradient across the membrane. The catalytic sites are hosted primarily by the beta subunits. The chain is ATP synthase subunit beta, chloroplastic from Dictyota dichotoma.